The primary structure comprises 814 residues: Phosphatidylinositol 3-kinase VPS34 (814 aa).

Residues 25–177 form the C2 PI3K-type domain; the sequence is LDGNLPVKKS…EKLMNKYERG (153 aa). A PIK helical domain is found at 274–449; sequence DRDLKPSNIE…YSTYELLEEN (176 aa). The 268-residue stretch at 532 to 799 folds into the PI3K/PI4K catalytic domain; the sequence is VAGESSLFKS…LINESVSALF (268 aa). Positions 538 to 544 are G-loop; that stretch reads LFKSALH. The segment at 668-676 is catalytic loop; sequence GIGDRHLDN. The activation loop stretch occupies residues 687–708; it reads HVDFAFILGRDPKPFPPPMKLC.

This sequence belongs to the PI3/PI4-kinase family. In terms of assembly, interacts with VPS15. Component of a complex made of VPS38/USL1 and PI3K main subunits such as VPS15, ATG6/VPS30 and VPS34. Binds directly to VPS38/USL1.

The catalysed reaction is a 1,2-diacyl-sn-glycero-3-phospho-(1D-myo-inositol) + ATP = a 1,2-diacyl-sn-glycero-3-phospho-(1D-myo-inositol-3-phosphate) + ADP + H(+). With respect to regulation, the PI3K inhibitor LY294002 affects phosphatidylinositol 3-phosphate (PI3P) levels and triggers a decrease in proline, hydrophobic and aromatic amino acids, and sugars (e.g. raffinose) accumulation in response to salt treatment correlated with lower P5CS1 expression and higher ProDH1 expression, genes involved in proline biosynthesis and catabolism, respectively. Functionally, involved in the negative regulation of proline, hydrophobic and aromatic amino acids accumulation, especially in response to salt (NaCl), either through inhibition of their synthesis and/or promotion of their catabolism. Triggers defense responses (e.g. pathogenesis related (PR1 and PR5) gene expression and hydrogen peroxide H(2)O(2) burst) to the bacterial pathogen compatible Pseudomonas syringae pv tomato DC3000 (Pst DC3000) and incompatible Pst DC3000 (avrRpt2), by regulating reactive ogygen species (ROS) production and by promoting stomatal closure. In Arabidopsis thaliana (Mouse-ear cress), this protein is Phosphatidylinositol 3-kinase VPS34.